The chain runs to 211 residues: Transcriptional regulatory protein RcsA (211 aa).

In terms of domain architecture, HTH luxR-type spans 135–200 (SEVHPFTLSQ…VIYHVVRLTD (66 aa)). Positions 159 to 178 (TIQISDKMQIKAKTVSSHKG) form a DNA-binding region, H-T-H motif.

It belongs to the RcsA family.

Component of the Rcs signaling system, which controls transcription of numerous genes. Binds to DNA to regulate expression of genes. This chain is Transcriptional regulatory protein RcsA, found in Erwinia amylovora (Fire blight bacteria).